The primary structure comprises 181 residues: Lysozyme B (181 aa).

A signal peptide spans 1–19; the sequence is MRISFFLLILAVIIGYAYG. Residues 139–181 constitute a propeptide that is removed on maturation; it reads LTDSRPLGPFNVTEEEKAQLFIDHEIAMAQCEAEKTCNGFDLE.

Belongs to the dictyostelium lysozyme family. Post-translationally, contains six disulfide bonds.

The protein localises to the cytoplasmic vesicle lumen. It catalyses the reaction Hydrolysis of (1-&gt;4)-beta-linkages between N-acetylmuramic acid and N-acetyl-D-glucosamine residues in a peptidoglycan and between N-acetyl-D-glucosamine residues in chitodextrins.. In terms of biological role, has antibacterial activity. The protein is Lysozyme B (alyB) of Dictyostelium discoideum (Social amoeba).